A 124-amino-acid polypeptide reads, in one-letter code: Hydrogenase maturation factor HypA (124 aa).

His2 lines the Ni(2+) pocket. Zn(2+) contacts are provided by Cys78, Cys81, Cys97, and Cys100.

This sequence belongs to the HypA/HybF family.

Involved in the maturation of [NiFe] hydrogenases. Required for nickel insertion into the metal center of the hydrogenase. The chain is Hydrogenase maturation factor HypA from Methanococcus vannielii (strain ATCC 35089 / DSM 1224 / JCM 13029 / OCM 148 / SB).